The chain runs to 372 residues: Bifunctional enzyme IspD/IspF (372 aa).

The 2-C-methyl-D-erythritol 4-phosphate cytidylyltransferase stretch occupies residues 1–210 (MLDLSLIMLG…LNLNSPSNDI (210 aa)). Residues 211–372 (FCGNGFDVHA…LKYFNWRNVL (162 aa)) form a 2-C-methyl-D-erythritol 2,4-cyclodiphosphate synthase region. A divalent metal cation contacts are provided by Asp-217 and His-219. 4-CDP-2-C-methyl-D-erythritol 2-phosphate contacts are provided by residues 217-219 (DVH) and 243-244 (HS). His-251 is an a divalent metal cation binding site. 4-CDP-2-C-methyl-D-erythritol 2-phosphate-binding positions include 265–267 (DIG), 270–274 (YPDND), 341–344 (TTTE), Phe-348, and Arg-351.

The protein in the N-terminal section; belongs to the IspD/TarI cytidylyltransferase family. IspD subfamily. In the C-terminal section; belongs to the IspF family. The cofactor is a divalent metal cation.

It catalyses the reaction 2-C-methyl-D-erythritol 4-phosphate + CTP + H(+) = 4-CDP-2-C-methyl-D-erythritol + diphosphate. The catalysed reaction is 4-CDP-2-C-methyl-D-erythritol 2-phosphate = 2-C-methyl-D-erythritol 2,4-cyclic diphosphate + CMP. The protein operates within isoprenoid biosynthesis; isopentenyl diphosphate biosynthesis via DXP pathway; isopentenyl diphosphate from 1-deoxy-D-xylulose 5-phosphate: step 2/6. Its pathway is isoprenoid biosynthesis; isopentenyl diphosphate biosynthesis via DXP pathway; isopentenyl diphosphate from 1-deoxy-D-xylulose 5-phosphate: step 4/6. Functionally, bifunctional enzyme that catalyzes the formation of 4-diphosphocytidyl-2-C-methyl-D-erythritol from CTP and 2-C-methyl-D-erythritol 4-phosphate (MEP) (IspD), and catalyzes the conversion of 4-diphosphocytidyl-2-C-methyl-D-erythritol 2-phosphate (CDP-ME2P) to 2-C-methyl-D-erythritol 2,4-cyclodiphosphate (ME-CPP) with a corresponding release of cytidine 5-monophosphate (CMP) (IspF). This is Bifunctional enzyme IspD/IspF from Campylobacter fetus subsp. fetus (strain 82-40).